The chain runs to 278 residues: Orotidine 5'-phosphate decarboxylase (278 aa).

Residue lysine 96 is the Proton donor of the active site.

This sequence belongs to the OMP decarboxylase family. Type 2 subfamily.

The enzyme catalyses orotidine 5'-phosphate + H(+) = UMP + CO2. It participates in pyrimidine metabolism; UMP biosynthesis via de novo pathway; UMP from orotate: step 2/2. This Streptomyces coelicolor (strain ATCC BAA-471 / A3(2) / M145) protein is Orotidine 5'-phosphate decarboxylase (pyrF).